The following is a 340-amino-acid chain: Protein-arginine kinase (340 aa).

In terms of domain architecture, Phosphagen kinase C-terminal spans 21–242 (VVLSSRIRLA…EQIIMQERVA (222 aa)). Residues 24 to 28 (SSRIR), His-79, Arg-113, 164 to 168 (RASVM), and 195 to 200 (RGIYGE) contribute to the ATP site.

Belongs to the ATP:guanido phosphotransferase family.

It catalyses the reaction L-arginyl-[protein] + ATP = N(omega)-phospho-L-arginyl-[protein] + ADP + H(+). In terms of biological role, catalyzes the specific phosphorylation of arginine residues in proteins. This chain is Protein-arginine kinase, found in Listeria welshimeri serovar 6b (strain ATCC 35897 / DSM 20650 / CCUG 15529 / CIP 8149 / NCTC 11857 / SLCC 5334 / V8).